The primary structure comprises 278 residues: Adenosylcobinamide-GDP ribazoletransferase (278 aa).

7 helical membrane passes run 35-55 (VVGI…NFIL), 62-82 (AVLP…TGAL), 116-136 (GALA…SLTI), 141-161 (AAVY…VVSC), 185-205 (LIVA…MPFI), 222-242 (LIIV…SKLI), and 257-277 (LLEI…TFFI).

This sequence belongs to the CobS family. Mg(2+) is required as a cofactor.

The protein localises to the cell inner membrane. The catalysed reaction is alpha-ribazole + adenosylcob(III)inamide-GDP = adenosylcob(III)alamin + GMP + H(+). It carries out the reaction alpha-ribazole 5'-phosphate + adenosylcob(III)inamide-GDP = adenosylcob(III)alamin 5'-phosphate + GMP + H(+). Its pathway is cofactor biosynthesis; adenosylcobalamin biosynthesis; adenosylcobalamin from cob(II)yrinate a,c-diamide: step 7/7. Its function is as follows. Joins adenosylcobinamide-GDP and alpha-ribazole to generate adenosylcobalamin (Ado-cobalamin). Also synthesizes adenosylcobalamin 5'-phosphate from adenosylcobinamide-GDP and alpha-ribazole 5'-phosphate. This chain is Adenosylcobinamide-GDP ribazoletransferase, found in Fusobacterium nucleatum subsp. nucleatum (strain ATCC 25586 / DSM 15643 / BCRC 10681 / CIP 101130 / JCM 8532 / KCTC 2640 / LMG 13131 / VPI 4355).